Here is a 901-residue protein sequence, read N- to C-terminus: ABC transporter A family member 8 (901 aa).

7 helical membrane-spanning segments follow: residues 34 to 54 (LITI…LFDT), 315 to 335 (IASL…FPVI), 369 to 389 (FLLI…LIGL), 402 to 422 (VFFF…SAMF), 427 to 447 (TATV…IFLF), 460 to 477 (WIIA…RGLY), and 508 to 528 (CIML…DQII). The 238-residue stretch at 586–823 (VLCNNLKKVY…YGGSYVLTVT (238 aa)) folds into the ABC transporter domain. 624–631 (GPNGAGKT) contributes to the ATP binding site.

The protein belongs to the ABC transporter superfamily. ABCA family. CPR flippase (TC 3.A.1.211) subfamily.

The protein localises to the membrane. This chain is ABC transporter A family member 8 (ABCA8), found in Arabidopsis thaliana (Mouse-ear cress).